The primary structure comprises 540 residues: uncharacterized protein (540 aa).

A chloroplast-targeting transit peptide spans 1–58; sequence MAVSAFRGTRLPLFHHSQFPVARTVSGTSKKMIGARNFKGFVLTAQYSQTQDLFTSRL. Positions 195 to 533 constitute a Protein kinase domain; the sequence is YVDPTPIASA…ISIASNKRTN (339 aa). Residues 201–209 and Lys224 contribute to the ATP site; that span reads IASASIAQV. The active-site Proton acceptor is the Asp362.

It belongs to the protein kinase superfamily. ADCK protein kinase family.

It localises to the plastid. It is found in the chloroplast. The protein resides in the plastoglobule. This is an uncharacterized protein from Arabidopsis thaliana (Mouse-ear cress).